The sequence spans 331 residues: UDP-xylose and UDP-N-acetylglucosamine transporter (331 aa).

A run of 10 helical transmembrane segments spans residues 5–25, 30–50, 59–79, 92–112, 122–142, 153–173, 201–221, 238–260, 267–289, and 301–321; these read FAVT…ELLV, GCGN…GFIF, PQIP…VSVI, LHMI…IIIL, LSIV…AKQV, GVYA…ALLM, CLPL…AVLF, VMWF…VFIL, LTVT…LYFQ, and AVVF…PAAF.

It belongs to the nucleotide-sugar transporter family. SLC35B subfamily.

It is found in the golgi apparatus membrane. In terms of biological role, sugar transporter that specifically mediates the transport of UDP-xylose (UDP-Xyl) and UDP-N-acetylglucosamine (UDP-GlcNAc) from cytosol into Golgi. The polypeptide is UDP-xylose and UDP-N-acetylglucosamine transporter (slc35b4) (Danio rerio (Zebrafish)).